An 879-amino-acid chain; its full sequence is Phosphoenolpyruvate carboxylase (879 aa).

Active-site residues include His-138 and Lys-545.

Belongs to the PEPCase type 1 family. It depends on Mg(2+) as a cofactor.

It carries out the reaction oxaloacetate + phosphate = phosphoenolpyruvate + hydrogencarbonate. Functionally, forms oxaloacetate, a four-carbon dicarboxylic acid source for the tricarboxylic acid cycle. The sequence is that of Phosphoenolpyruvate carboxylase from Haemophilus influenzae (strain 86-028NP).